A 268-amino-acid polypeptide reads, in one-letter code: Secreted RxLR effector protein 5 (268 aa).

The N-terminal stretch at 1-21 (MRGAFYMAITLFLARSRSATA) is a signal peptide. Residues 48 to 63 (RYLRDGLALSAANEER) carry the RxLR-dEER motif. A glycan (N-linked (GlcNAc...) asparagine) is linked at Asn104.

The protein belongs to the RxLR effector family.

It is found in the secreted. It localises to the host nucleus. Its function is as follows. Effector that acts as a broad suppressor of cell death to interrupt plant immunity. Inhibits cell death induced by cell death-inducing proteins, including the PAMP elicitor INF1 from P.infestans. This chain is Secreted RxLR effector protein 5, found in Plasmopara viticola (Downy mildew of grapevine).